The following is a 397-amino-acid chain: Phosphoglycerate kinase (397 aa).

Residues 23-25 (DLN), Arg38, 61-64 (HLGR), Arg119, and Arg152 contribute to the substrate site. ATP is bound by residues Lys202, Glu324, and 354–357 (GGDT).

It belongs to the phosphoglycerate kinase family. As to quaternary structure, monomer.

It is found in the cytoplasm. It carries out the reaction (2R)-3-phosphoglycerate + ATP = (2R)-3-phospho-glyceroyl phosphate + ADP. Its pathway is carbohydrate degradation; glycolysis; pyruvate from D-glyceraldehyde 3-phosphate: step 2/5. The chain is Phosphoglycerate kinase (pgk) from Xanthobacter flavus.